The sequence spans 696 residues: Serotransferrin (696 aa).

Transferrin-like domains follow at residues valine 6–glutamate 332 and valine 346–lysine 672. 2 disulfides stabilise this stretch: cysteine 9-cysteine 47 and cysteine 19-cysteine 38. Arginine 23 is subject to Dimethylated arginine. A glycan (N-linked (GlcNAc...) asparagine) is linked at asparagine 25. Aspartate 62 and tyrosine 94 together coordinate Fe(3+). 5 disulfide bridges follow: cysteine 117/cysteine 198, cysteine 157/cysteine 173, cysteine 160/cysteine 181, cysteine 170/cysteine 183, and cysteine 231/cysteine 245. The hydrogencarbonate site is built by threonine 119, arginine 123, alanine 125, and glycine 126. Position 192 (tyrosine 192) interacts with Fe(3+). Histidine 253 contributes to the Fe(3+) binding site. Disulfide bonds link cysteine 343/cysteine 605, cysteine 349/cysteine 381, cysteine 359/cysteine 372, cysteine 406/cysteine 682, cysteine 423/cysteine 646, cysteine 456/cysteine 532, cysteine 480/cysteine 673, cysteine 490/cysteine 504, cysteine 501/cysteine 515, cysteine 572/cysteine 586, and cysteine 624/cysteine 629. Serine 374 is subject to Phosphoserine. Positions 396 and 431 each coordinate Fe(3+). Hydrogencarbonate contacts are provided by threonine 458, arginine 462, alanine 464, and glycine 465. Asparagine 497 carries N-linked (GlcNAc...) asparagine glycosylation. Tyrosine 526 is a binding site for Fe(3+). Histidine 594 provides a ligand contact to Fe(3+). Serine 674 carries the phosphoserine modification.

It belongs to the transferrin family. Monomer. Part of a complex composed of SLC40A1/ferroportin, TF/transferrin and HEPH/hephaestin that transfers iron from cells to transferrin. In terms of tissue distribution, expressed by the liver and secreted in plasma.

Its subcellular location is the secreted. Its function is as follows. Transferrins are iron binding transport proteins which can bind two Fe(3+) ions in association with the binding of an anion, usually bicarbonate. It is responsible for the transport of iron from sites of absorption and heme degradation to those of storage and utilization. Serum transferrin may also have a further role in stimulating cell proliferation. The chain is Serotransferrin (TF) from Sus scrofa (Pig).